The following is a 492-amino-acid chain: Cytochrome P450 26A1 (492 aa).

Cys437 contributes to the heme binding site.

The protein belongs to the cytochrome P450 family. It depends on heme as a cofactor. In terms of tissue distribution, expressed primarily in ovary, brain and eyes.

Its subcellular location is the endoplasmic reticulum membrane. It is found in the microsome membrane. The enzyme catalyses all-trans-retinoate + reduced [NADPH--hemoprotein reductase] + O2 = all-trans-(4S)-hydroxyretinoate + oxidized [NADPH--hemoprotein reductase] + H2O + H(+). A cytochrome P450 monooxygenase involved in the metabolism of all-trans retinoic acid (atRA), a signaling molecule that binds to retinoic acid receptors and regulates gene transcription. May regulate at-RA signaling during hindbrain development. Mechanistically, uses molecular oxygen inserting one oxygen atom into a substrate, and reducing the second into a water molecule, with two electrons provided by NADPH via cytochrome P450 reductase (CPR; NADPH-ferrihemoprotein reductase). Catalyzes the hydroxylation of carbon hydrogen bonds of atRA primarily at C-4. Has no activity toward 9-cis and 13-cis retinoic acid stereoisomers. May play a role in the oxidative metabolism of xenobiotics such as tazarotenic acid. The sequence is that of Cytochrome P450 26A1 (cyp26a1) from Xenopus laevis (African clawed frog).